Consider the following 187-residue polypeptide: UPF0301 protein VV2869 (187 aa).

The protein belongs to the UPF0301 (AlgH) family.

This Vibrio vulnificus (strain YJ016) protein is UPF0301 protein VV2869.